Consider the following 462-residue polypeptide: Metacaspase-1 (462 aa).

The span at 1 to 21 (MSYYPPPSGYPGGPPAYPPPQ) shows a compositional bias: pro residues. The tract at residues 1 to 150 (MSYYPPPSGY…PPPPSGSVAF (150 aa)) is disordered. The segment covering 22-33 (QQQQQQQQYPSY) has biased composition (low complexity). Pro residues-rich tracts occupy residues 49–69 (PSYP…PPHS) and 77–102 (SPQP…PPSP). Residues His-253 and Cys-309 contribute to the active site.

The protein belongs to the peptidase C14B family.

Involved in cell death (apoptosis). This is Metacaspase-1 (MCA1) from Coccidioides immitis (strain RS) (Valley fever fungus).